The chain runs to 703 residues: MLLSALLTSVGINLGLCFLFFTLYSILRKQPSNVTVYGPRLVKKDGKSQQSNEFNLERLLPTAGWVKRALEPTNDEILSNLGLDALVFIRVFVFSIRVFSFASVVGIFILLPVNYMGTEFEEFFDLPKKSMDNFSISNVNDGSNKLWIHFCAIYIFTAVVCSLLYYEHKYILTKRIAHLYSSKPQPQEFTVLVSGVPLVSGNSISETVENFFREYHSSSYLSHIVVHRTDKLKVLMNDAEKLYKKLTRVKSGSISRQKSRWGGFLGMFGNNVDVVDHYQKKLDKLEDDMRLKQSLLAGEEVPAAFVSFRTRHGAAIATNIQQGIDPTQWLTEAAPEPEDVHWPFFTASFVRRWISNVVVLVAFVALLILYIVPVVLVQGLANLHQLETWFPFLKGILNMKIVSQVITGYLPSLIFQLFLLIVPPIMLLLSSMQGFISHSQIEKSACIKLLIFTVWNSFFANVLSGSALYRVNVFLEPKTIPRVLAAAVPAQASFFVSYVVTSGWTGLSSEILRLVPLLWSFITKLFGKEDDKEFEVPSTPFCQEIPRILFFGLLGITYFFLSPLILPFLLVYYCLGYIIYRNQLLNVYAAKYETGGKFWPIVHSYTIFSLVLMHIIAVGLFGLKELPVASSLTIPLPVLTVLFSIYCQRRFLPNFKSYPTQCLVNKDKADEREQNMSEFYSELVVAYRDPALSASQDSRDISP.

The Extracellular portion of the chain corresponds to 1–3 (MLL). Residues 4–26 (SALLTSVGINLGLCFLFFTLYSI) form a helical membrane-spanning segment. At 27 to 81 (LRKQPSNVTVYGPRLVKKDGKSQQSNEFNLERLLPTAGWVKRALEPTNDEILSNL) the chain is on the cytoplasmic side. A helical transmembrane segment spans residues 82-115 (GLDALVFIRVFVFSIRVFSFASVVGIFILLPVNY). Residues 116 to 143 (MGTEFEEFFDLPKKSMDNFSISNVNDGS) are Extracellular-facing. The helical transmembrane segment at 144–165 (NKLWIHFCAIYIFTAVVCSLLY) threads the bilayer. Over 166–355 (YEHKYILTKR…TASFVRRWIS (190 aa)) the chain is Cytoplasmic. The stretch at 228–300 (RTDKLKVLMN…LKQSLLAGEE (73 aa)) forms a coiled coil. A helical membrane pass occupies residues 356-382 (NVVVLVAFVALLILYIVPVVLVQGLAN). At 383–410 (LHQLETWFPFLKGILNMKIVSQVITGYL) the chain is on the extracellular side. The helical transmembrane segment at 411–432 (PSLIFQLFLLIVPPIMLLLSSM) threads the bilayer. Topologically, residues 433 to 436 (QGFI) are cytoplasmic. A helical membrane pass occupies residues 437–463 (SHSQIEKSACIKLLIFTVWNSFFANVL). Residues 464–489 (SGSALYRVNVFLEPKTIPRVLAAAVP) lie on the Extracellular side of the membrane. A helical membrane pass occupies residues 490–512 (AQASFFVSYVVTSGWTGLSSEIL). The Cytoplasmic portion of the chain corresponds to 513–540 (RLVPLLWSFITKLFGKEDDKEFEVPSTP). A helical membrane pass occupies residues 541 to 561 (FCQEIPRILFFGLLGITYFFL). A topological domain (extracellular) is located at residue serine 562. A helical transmembrane segment spans residues 563-586 (PLILPFLLVYYCLGYIIYRNQLLN). The Cytoplasmic segment spans residues 587–598 (VYAAKYETGGKF). A helical membrane pass occupies residues 599-623 (WPIVHSYTIFSLVLMHIIAVGLFGL). The Extracellular segment spans residues 624–626 (KEL). The chain crosses the membrane as a helical span at residues 627 to 655 (PVASSLTIPLPVLTVLFSIYCQRRFLPNF). Residues 656–703 (KSYPTQCLVNKDKADEREQNMSEFYSELVVAYRDPALSASQDSRDISP) lie on the Cytoplasmic side of the membrane.

It belongs to the CSC1 (TC 1.A.17) family. In terms of assembly, homodimer.

It is found in the membrane. Acts as an osmosensitive calcium-permeable cation channel. This Arabidopsis thaliana (Mouse-ear cress) protein is Hyperosmolality-gated Ca2+ permeable channel 2.3.